The following is a 901-amino-acid chain: Protein translocase subunit SecA (901 aa).

ATP contacts are provided by residues glutamine 87, 105 to 109, and aspartate 512; that span reads GEGKT. The disordered stretch occupies residues 852-901; that stretch reads AQMQQLSHQDDDSAAAAALAAQTGDRKVGRNDPCPCGSGKKYKQCHGRLS. Residues cysteine 885, cysteine 887, cysteine 896, and histidine 897 each contribute to the Zn(2+) site. Positions 891–901 are enriched in basic residues; that stretch reads KKYKQCHGRLS.

This sequence belongs to the SecA family. As to quaternary structure, monomer and homodimer. Part of the essential Sec protein translocation apparatus which comprises SecA, SecYEG and auxiliary proteins SecDF-YajC and YidC. It depends on Zn(2+) as a cofactor.

Its subcellular location is the cell inner membrane. It is found in the cytoplasm. It carries out the reaction ATP + H2O + cellular proteinSide 1 = ADP + phosphate + cellular proteinSide 2.. In terms of biological role, part of the Sec protein translocase complex. Interacts with the SecYEG preprotein conducting channel. Has a central role in coupling the hydrolysis of ATP to the transfer of proteins into and across the cell membrane, serving both as a receptor for the preprotein-SecB complex and as an ATP-driven molecular motor driving the stepwise translocation of polypeptide chains across the membrane. The protein is Protein translocase subunit SecA of Citrobacter koseri (strain ATCC BAA-895 / CDC 4225-83 / SGSC4696).